A 78-amino-acid polypeptide reads, in one-letter code: Protein SlyX homolog (78 aa).

Belongs to the SlyX family.

In Xylella fastidiosa (strain 9a5c), this protein is Protein SlyX homolog.